The primary structure comprises 155 residues: SsrA-binding protein (155 aa).

The protein belongs to the SmpB family.

It localises to the cytoplasm. In terms of biological role, required for rescue of stalled ribosomes mediated by trans-translation. Binds to transfer-messenger RNA (tmRNA), required for stable association of tmRNA with ribosomes. tmRNA and SmpB together mimic tRNA shape, replacing the anticodon stem-loop with SmpB. tmRNA is encoded by the ssrA gene; the 2 termini fold to resemble tRNA(Ala) and it encodes a 'tag peptide', a short internal open reading frame. During trans-translation Ala-aminoacylated tmRNA acts like a tRNA, entering the A-site of stalled ribosomes, displacing the stalled mRNA. The ribosome then switches to translate the ORF on the tmRNA; the nascent peptide is terminated with the 'tag peptide' encoded by the tmRNA and targeted for degradation. The ribosome is freed to recommence translation, which seems to be the essential function of trans-translation. The polypeptide is SsrA-binding protein (Ligilactobacillus salivarius (strain UCC118) (Lactobacillus salivarius)).